The sequence spans 246 residues: 1-(5-phosphoribosyl)-5-[(5-phosphoribosylamino)methylideneamino] imidazole-4-carboxamide isomerase (246 aa).

Asp8 (proton acceptor) is an active-site residue. Catalysis depends on Asp129, which acts as the Proton donor.

Belongs to the HisA/HisF family.

The protein localises to the cytoplasm. The enzyme catalyses 1-(5-phospho-beta-D-ribosyl)-5-[(5-phospho-beta-D-ribosylamino)methylideneamino]imidazole-4-carboxamide = 5-[(5-phospho-1-deoxy-D-ribulos-1-ylimino)methylamino]-1-(5-phospho-beta-D-ribosyl)imidazole-4-carboxamide. It functions in the pathway amino-acid biosynthesis; L-histidine biosynthesis; L-histidine from 5-phospho-alpha-D-ribose 1-diphosphate: step 4/9. The chain is 1-(5-phosphoribosyl)-5-[(5-phosphoribosylamino)methylideneamino] imidazole-4-carboxamide isomerase from Desulforamulus reducens (strain ATCC BAA-1160 / DSM 100696 / MI-1) (Desulfotomaculum reducens).